Consider the following 117-residue polypeptide: Large ribosomal subunit protein uL18 (117 aa).

Belongs to the universal ribosomal protein uL18 family. As to quaternary structure, part of the 50S ribosomal subunit; part of the 5S rRNA/L5/L18/L25 subcomplex. Contacts the 5S and 23S rRNAs.

In terms of biological role, this is one of the proteins that bind and probably mediate the attachment of the 5S RNA into the large ribosomal subunit, where it forms part of the central protuberance. In Vibrio atlanticus (strain LGP32) (Vibrio splendidus (strain Mel32)), this protein is Large ribosomal subunit protein uL18.